Consider the following 97-residue polypeptide: Exodeoxyribonuclease 7 small subunit (97 aa).

A disordered region spans residues 1–21 (MAKTATPGACASDPGSGPLPE).

The protein belongs to the XseB family. Heterooligomer composed of large and small subunits.

It localises to the cytoplasm. The catalysed reaction is Exonucleolytic cleavage in either 5'- to 3'- or 3'- to 5'-direction to yield nucleoside 5'-phosphates.. Its function is as follows. Bidirectionally degrades single-stranded DNA into large acid-insoluble oligonucleotides, which are then degraded further into small acid-soluble oligonucleotides. The chain is Exodeoxyribonuclease 7 small subunit from Burkholderia mallei (strain NCTC 10247).